The sequence spans 401 residues: Chorismate synthase (401 aa).

Positions 40 and 46 each coordinate NADP(+). FMN-binding positions include 135-137, 256-257, Gly300, 315-319, and Arg341; these read RAS, QA, and KPIST.

Belongs to the chorismate synthase family. As to quaternary structure, homotetramer. It depends on FMNH2 as a cofactor.

The catalysed reaction is 5-O-(1-carboxyvinyl)-3-phosphoshikimate = chorismate + phosphate. It participates in metabolic intermediate biosynthesis; chorismate biosynthesis; chorismate from D-erythrose 4-phosphate and phosphoenolpyruvate: step 7/7. Its function is as follows. Catalyzes the anti-1,4-elimination of the C-3 phosphate and the C-6 proR hydrogen from 5-enolpyruvylshikimate-3-phosphate (EPSP) to yield chorismate, which is the branch point compound that serves as the starting substrate for the three terminal pathways of aromatic amino acid biosynthesis. This reaction introduces a second double bond into the aromatic ring system. The sequence is that of Chorismate synthase from Mycobacterium bovis (strain BCG / Pasteur 1173P2).